A 600-amino-acid polypeptide reads, in one-letter code: Proline--tRNA ligase (600 aa).

Belongs to the class-II aminoacyl-tRNA synthetase family. ProS type 1 subfamily. Homodimer.

Its subcellular location is the cytoplasm. The catalysed reaction is tRNA(Pro) + L-proline + ATP = L-prolyl-tRNA(Pro) + AMP + diphosphate. Its function is as follows. Catalyzes the attachment of proline to tRNA(Pro) in a two-step reaction: proline is first activated by ATP to form Pro-AMP and then transferred to the acceptor end of tRNA(Pro). As ProRS can inadvertently accommodate and process non-cognate amino acids such as alanine and cysteine, to avoid such errors it has two additional distinct editing activities against alanine. One activity is designated as 'pretransfer' editing and involves the tRNA(Pro)-independent hydrolysis of activated Ala-AMP. The other activity is designated 'posttransfer' editing and involves deacylation of mischarged Ala-tRNA(Pro). The misacylated Cys-tRNA(Pro) is not edited by ProRS. This Prochlorococcus marinus subsp. pastoris (strain CCMP1986 / NIES-2087 / MED4) protein is Proline--tRNA ligase.